A 387-amino-acid chain; its full sequence is MATALVSPLTSQLNHEAVCSKFVLPKSPFMSGSKLFSSNMPCSTVPRRTRRSHCFASAKDMSFDHIPKQFRGDNLKDGVMQNFKNVPQYFYGLNSAQMDMFMTEDSPVRRQAEKVTEESISSRNNYLNNGGIWSMSGMNAADARRYSMSVQMYRGGGGGGGSERPRTAPPDLPSLLLDARICYLGMPIVPAVTELLVAQFMWLDYDNPTKPIYLYINSPGTQNEKMETVGSETEAYAIADTISYCKSDVYTINCGMAFGQAAMLLSLGKKGYRAVQPHSSTKLYLPKVNRSSGAAIDMWIKAKELDANTEYYIELLAKGTGKSKEQINEDIKRPKYLQAQAAIDYGIADKIADSQDSSFEKRDYDGTLAQRAMRPGGGSPAAPAGLR.

A chloroplast-targeting transit peptide spans 1–41 (MATALVSPLTSQLNHEAVCSKFVLPKSPFMSGSKLFSSNMP). The segment covering 355-365 (QDSSFEKRDYD) has biased composition (basic and acidic residues). Residues 355–387 (QDSSFEKRDYDGTLAQRAMRPGGGSPAAPAGLR) are disordered.

This sequence belongs to the peptidase S14 family. In terms of assembly, component of the chloroplastic Clp protease core complex which consist of at least 16 proteins: CLPP4 (3 copies), CLPP5 (3 copies), CLPR4 (2 copies), ClpP1 (1 copy), CLPP6 (1 copy), CLPR2 (1 copy), CLPT1 (1 copy), CLPT2 (1 copy) and 3 copies of CLPP3 and/or CLPR1 and/or CLPR3. The core complex is organized in two heptameric rings, one containing CLPP3,4,5,6 in a 1:2:3:1 ratio and the other CLPP1 and CLPR1,2,3,4 in a 3:1:1:1:1 ratio.

The protein resides in the plastid. Its subcellular location is the chloroplast stroma. In terms of biological role, required for chloroplast development and differentiation. This Arabidopsis thaliana (Mouse-ear cress) protein is ATP-dependent Clp protease proteolytic subunit-related protein 1, chloroplastic.